We begin with the raw amino-acid sequence, 338 residues long: Erlin-2 (338 aa).

The Cytoplasmic portion of the chain corresponds to 1–3 (MAQ). The chain crosses the membrane as a helical span at residues 4-24 (LGAVVAVAASFFCASLFSAVH). The Lumenal segment spans residues 25–338 (KIEEGHIGVY…DEPMEADSEN (314 aa)). Asn-106 carries an N-linked (GlcNAc...) asparagine glycan. Positions 177–309 (EAIRRNYELM…DIPNMFMDSA (133 aa)) are interaction with ERLIN1. Lys-267 is subject to N6-acetyllysine.

The protein belongs to the band 7/mec-2 family. In terms of assembly, forms a heteromeric complex with ERLIN1. In complex with ERLIN1, interacts with RNF170. Interacts with activated ITPR1, independently of the degree of ITPR1 polyubiquitination. Interacts with SCAP, INSIG1, SREBF1 and SREBF2 under cholesterol sufficiency conditions; indicative for an association with the SCAP-SREBP-INSIG complex. Probably part of an AMFR/gp78 and INSIG1-containing ubiquitin ligase complex involved in ERAD of HMGCR. Interacts with TMUB1; TMUB1 bridges the association with AMFR. Interacts with SYVN1 and RNF139. Interacts with TMEM259. Interacts with TMEM41B. Deubiquitinated by USP25; leading to stabilization.

It localises to the endoplasmic reticulum membrane. Functionally, component of the ERLIN1/ERLIN2 complex which mediates the endoplasmic reticulum-associated degradation (ERAD) of inositol 1,4,5-trisphosphate receptors (IP3Rs) such as ITPR1. Promotes sterol-accelerated ERAD of HMGCR probably implicating an AMFR/gp78-containing ubiquitin ligase complex. Involved in regulation of cellular cholesterol homeostasis by regulation the SREBP signaling pathway. May promote ER retention of the SCAP-SREBF complex. The sequence is that of Erlin-2 (ERLIN2) from Bos taurus (Bovine).